Reading from the N-terminus, the 151-residue chain is uncharacterized protein (151 aa).

This is an uncharacterized protein from Bacillus subtilis (strain 168).